Here is a 1401-residue protein sequence, read N- to C-terminus: MSDLLGILKQQGQSEEFDAIKIALASPELIRSWSYGEVKKPETINYRTFKPERDGLFCAKTFGPVKDYECLCGKYKRLKHRGVICEKCGVELALAKVRRERMGHIELASPVAHIWFLKSLPSRIGLLLDMTLRDIERVLYFEAFVVVDPGMTELERGQLLNDEAYLDAMEQYGDEFDARMGAEAIRDLLRQIDLEDEIRNLREELPTTNSETKIKKITKRLKLLEAFYESGNKPEWMIMDVLPVLPPDLRPLVPLDGGRFATSDLNDLYRRVINRNNRLKRLLDLNAPDIIVRNEKRMLQESVDALLDNGRRGRAITGTNKRPLKSLADMIKGKQGRFRQNLLGKRVDYSGRSVIVVGPTLKLHQCGLPKKMALELFKPFIFSKLEFRGLATTIKAAKKMVEREESVVWDILDDVIREHPILLNRAPTLHRLGIQAFEPVLIEGKAIQLHPLVCTAYNADFDGDQMAVHVPLTLEAQLEARSLMMSTNNILSPASGEPIIVPSQDVVLGLYYLTREKVNALGEGKIYSSAQEAQNFYEAGHLDIHAKIKIRMPKEDGETGYHLVETTVGRAILAEILPKGMPFDYINRTMTKKVISKVIDSCYRKFGLKETVIFADQLMYTGFKYATRSGASIGIEDMEIPDDKASIIEHADNEVREIESQFRSGLVTNGERYNKVIDIWSRTNELVAKSMMSKIATEEVTDAKGNKVRQESFNPIFMMADSGARGSAAQIRQLAGMRGLMAAPDGSIIETPITANFREGLNVFQYFISTHGARKGLADTALKTANSGYLTRRLVDVAQDVVITEDDCGTDTGILMQPLIEGGDIVEPLHERVLGRVVASDVYIPTQTEPVVKAGTLLDEEWVEKLEKHGVDQVMVRSPITCQTRFGLCAKCYGRDLARGHLVNTGEAVGIIAAQSIGEPGTQLTMRTFHIGGAASRATAANNIQIKTKGVIRLHNIKTVTHENKNLVAVSRSGEVTIVDEFGRERERYKVPYGAVISAQDNSPVEAGQVIATWDPHTHPVISEVSGRLKFVDLIDGITMNRQTDELTGLSNIVIIDAKQRSAAGRDLRPMVKLVTDEGDDIYLAGTNVPAQYYLPVDAIVNFEDGSLVGIGDVIARIPQERSKTRDITGGLPRVADLFEARKPKDSAVMAEVSGLVNFGKETKGKRRLIINVSEDQCHEELIPKWRHISVFEGEHVERGEIIAEGALNPHDILRLLGVGALANYIVNEVQDVYRLQGVKINDKHIEVIVRQMLRKRVITFAGDSKFLVGEQVEESAMLQENDKLLAEGKQIARGTPILLGITKASLATESFISAASFQETTRVLTEAAVSGKVDELRGLKENVMVGRLIPAGTGYTYHQSRKAKRARVAAGGDSSATHTVTASDVEHALSEALNADNHEH.

Zn(2+) contacts are provided by Cys70, Cys72, Cys85, and Cys88. 3 residues coordinate Mg(2+): Asp460, Asp462, and Asp464. Residues Cys808, Cys882, Cys889, and Cys892 each contribute to the Zn(2+) site.

This sequence belongs to the RNA polymerase beta' chain family. The RNAP catalytic core consists of 2 alpha, 1 beta, 1 beta' and 1 omega subunit. When a sigma factor is associated with the core the holoenzyme is formed, which can initiate transcription. Requires Mg(2+) as cofactor. It depends on Zn(2+) as a cofactor.

It catalyses the reaction RNA(n) + a ribonucleoside 5'-triphosphate = RNA(n+1) + diphosphate. Functionally, DNA-dependent RNA polymerase catalyzes the transcription of DNA into RNA using the four ribonucleoside triphosphates as substrates. The chain is DNA-directed RNA polymerase subunit beta' from Legionella pneumophila subsp. pneumophila (strain Philadelphia 1 / ATCC 33152 / DSM 7513).